The chain runs to 841 residues: Replication origin-binding protein (841 aa).

The Helicase ATP-binding domain occupies 45 to 210 (PLYPRTRNVL…AIMRGEENIH (166 aa)). Residue 58–65 (APMGSGKT) participates in ATP binding.

The protein belongs to the herpesviridae OriBP family. Homodimer. Interacts with the major DNA-binding protein. Interacts with the DNA helicase/primase complex-associated protein and the polymerase accessory protein.

The protein localises to the host nucleus. Functions as a docking protein to recruit essential components of the viral replication machinery to viral DNA origins. In the presence of the major DNA-binding protein, opens dsDNA leading to a conformational change in the origin that facilitates DNA unwinding and subsequent replication. In Gallid herpesvirus 2 (strain Chicken/Md5/ATCC VR-987) (GaHV-2), this protein is Replication origin-binding protein (MDV021).